The following is a 414-amino-acid chain: Protein IQ-DOMAIN 8 (414 aa).

The Nuclear localization signal 1 signature appears at 14-21 (NKKNITDD). Residues 40-61 (LISSSKGFKSRGGSYGTPSLGS) form a disordered region. 3 consecutive IQ domains span residues 92–120 (REWA…AVVR), 121–143 (IQAI…CMQA), and 144–169 (LVRV…EKPS). A calmodulin-binding region spans residues 119–132 (VRIQAIFRGRQVRK). Disordered regions lie at residues 156 to 190 (NRGP…SPGS), 218 to 244 (HQPR…SCKS), and 262 to 329 (GRLM…SGSF). Residues 164–184 (ELEKPSDQQKDDPAKQAEKGW) are compositionally biased toward basic and acidic residues. Polar residues predominate over residues 231–244 (KQGSVKKNNGSCKS). The span at 274–289 (NARKSESSVSEHDTVQ) shows a compositional bias: basic and acidic residues. Low complexity predominate over residues 307 to 328 (SSSATSSESSSTSQSPVPFSGS). A Nuclear localization signal 2 motif is present at residues 336–343 (YRKPSYMS). The interval 347 to 398 (SIKAKQRRSGSSSSCSKTPFEKKQSMSYNGDVNVRRSAGSDPLNNQWTDLYP) is disordered.

The protein belongs to the IQD family. As to quaternary structure, binds to multiple calmodulin (CaM) in the presence of Ca(2+) and CaM-like proteins.

It localises to the nucleus. The protein resides in the cytoplasm. It is found in the cytoskeleton. Its subcellular location is the nucleus envelope. In terms of biological role, may be involved in cooperative interactions with calmodulins or calmodulin-like proteins. Recruits calmodulin proteins to microtubules, thus being a potential scaffold in cellular signaling and trafficking. May associate with nucleic acids and regulate gene expression at the transcriptional or post-transcriptional level. In Arabidopsis thaliana (Mouse-ear cress), this protein is Protein IQ-DOMAIN 8.